We begin with the raw amino-acid sequence, 93 residues long: Small ribosomal subunit protein uS19 (93 aa).

The protein belongs to the universal ribosomal protein uS19 family.

Functionally, protein S19 forms a complex with S13 that binds strongly to the 16S ribosomal RNA. The chain is Small ribosomal subunit protein uS19 from Nitratidesulfovibrio vulgaris (strain ATCC 29579 / DSM 644 / CCUG 34227 / NCIMB 8303 / VKM B-1760 / Hildenborough) (Desulfovibrio vulgaris).